The following is a 400-amino-acid chain: WW domain-containing transcription regulator protein 1 (400 aa).

Lys-46 is covalently cross-linked (Glycyl lysine isopeptide (Lys-Gly) (interchain with G-Cter in ubiquitin)). Positions 52–117 (FFKEPDSGSH…QQHAHLRQQS (66 aa)) are disordered. Over residues 61–70 (HSRQSSTDSS) the composition is skewed to polar residues. Ser-62 and Ser-89 each carry phosphoserine. Residues 91-110 (PASLQLGPGAGAAGSPAQQH) are compositionally biased toward low complexity. The region spanning 124–157 (LPLPPGWEMTFTATGQRYFLNHIEKITTWQDPRK) is the WW domain. The segment covering 192 to 211 (NHQHQQQMAPTNLSQQNHPT) has biased composition (polar residues). A disordered region spans residues 192–216 (NHQHQQQMAPTNLSQQNHPTQNPPA). Residues 222 to 400 (PNALTTQQQQ…NKSEPFLTWL (179 aa)) form a required for interaction with PALS1 region. A phosphoserine mark is found at Ser-295 and Ser-311. Residues 394-400 (EPFLTWL) carry the PDZ-binding motif.

As to quaternary structure, binds to SLC9A3R2 via the PDZ motif at the plasma membrane. Binds to YWHAZ in vivo and in vitro through the phosphoserine-binding motif RSHSSP. Interacts (via coiled-coil domain) with SMAD2 (via MH1 domain), SMAD3 and SMAD4. Interacts with MED15. Interacts with PAX8 and NKX2-1. Interacts with TEAD1, TEAD2, TEAD3 and TEAD4. Interacts (via WW domain) with PALS1. Interacts with LATS1. Interacts with YAP1 (when phosphorylated at 'Ser-112'). Interacts (via WW domain) with PRRG4 (via cytoplasmic domain). Interacts (via WW domain) with AMOTL2 (via PPXY motif); the interaction promotes WWTR1/TAZ localization to the cytoplasm and tight junctions, thereby inhibiting its transcriptional coactivator properties. Interacts (via WW domain) with AMOT; the interaction facilitates translocation of WWTR1/TAZ to the cytoplasm. Phosphorylated by LATS2 and STK3/MST2. Phosphorylation by LATS2 results in creation of 14-3-3 binding sites, retention in the cytoplasm, and functional inactivation. Phosphorylation results in the inhibition of transcriptional coactivation through YWHAZ-mediated nuclear export. Post-translationally, ubiquitinated at Lys-46; leading to proteasomal degradation. Deubiquitinated and stabilized by UCHL1 at Lys-46; leading to inhibition of osteoclastogenesis.

Its subcellular location is the cytoplasm. It is found in the nucleus. The protein localises to the cell membrane. The protein resides in the cell junction. It localises to the tight junction. Functionally, transcriptional coactivator which acts as a downstream regulatory target in the Hippo signaling pathway that plays a pivotal role in organ size control and tumor suppression by restricting proliferation and promoting apoptosis. The core of this pathway is composed of a kinase cascade wherein STK3/MST2 and STK4/MST1, in complex with its regulatory protein SAV1, phosphorylates and activates LATS1/2 in complex with its regulatory protein MOB1, which in turn phosphorylates and inactivates YAP1 oncoprotein and WWTR1/TAZ. WWTR1 enhances PAX8 and NKX2-1/TTF1-dependent gene activation. In conjunction with YAP1, involved in the regulation of TGFB1-dependent SMAD2 and SMAD3 nuclear accumulation. Plays a key role in coupling SMADs to the transcriptional machinery such as the mediator complex. Regulates embryonic stem-cell self-renewal, promotes cell proliferation and epithelial-mesenchymal transition. The sequence is that of WW domain-containing transcription regulator protein 1 from Canis lupus familiaris (Dog).